We begin with the raw amino-acid sequence, 768 residues long: Post-transcriptional regulator MKT1 (768 aa).

It belongs to the XPG/RAD2 endonuclease family. Interacts with PBP1.

The protein resides in the cytoplasm. It is found in the cytosol. Its function is as follows. Involved in 3'-UTR mediated RNA regulation. Complexes with PBP1 to promote mRNA interactions with poly(A)-binding protein. The polypeptide is Post-transcriptional regulator MKT1 (Cryptococcus neoformans var. grubii serotype A (strain H99 / ATCC 208821 / CBS 10515 / FGSC 9487) (Filobasidiella neoformans var. grubii)).